We begin with the raw amino-acid sequence, 109 residues long: Small ribosomal subunit protein uS10 (109 aa).

Belongs to the universal ribosomal protein uS10 family. In terms of assembly, part of the 30S ribosomal subunit.

Involved in the binding of tRNA to the ribosomes. The protein is Small ribosomal subunit protein uS10 of Koribacter versatilis (strain Ellin345).